The sequence spans 434 residues: Trigger factor (434 aa).

Residues 160-245 (GDKVKMNFVG…LTEVLAANLP (86 aa)) form the PPIase FKBP-type domain.

Belongs to the FKBP-type PPIase family. Tig subfamily.

It is found in the cytoplasm. It carries out the reaction [protein]-peptidylproline (omega=180) = [protein]-peptidylproline (omega=0). Functionally, involved in protein export. Acts as a chaperone by maintaining the newly synthesized protein in an open conformation. Functions as a peptidyl-prolyl cis-trans isomerase. This is Trigger factor from Shewanella sp. (strain ANA-3).